Reading from the N-terminus, the 262-residue chain is Tryptophan synthase alpha chain (262 aa).

Active-site proton acceptor residues include Glu48 and Asp59.

This sequence belongs to the TrpA family. Tetramer of two alpha and two beta chains.

The enzyme catalyses (1S,2R)-1-C-(indol-3-yl)glycerol 3-phosphate + L-serine = D-glyceraldehyde 3-phosphate + L-tryptophan + H2O. It participates in amino-acid biosynthesis; L-tryptophan biosynthesis; L-tryptophan from chorismate: step 5/5. Its function is as follows. The alpha subunit is responsible for the aldol cleavage of indoleglycerol phosphate to indole and glyceraldehyde 3-phosphate. The sequence is that of Tryptophan synthase alpha chain from Helicobacter pylori (strain J99 / ATCC 700824) (Campylobacter pylori J99).